The following is a 301-amino-acid chain: Acetyl-coenzyme A carboxylase carboxyl transferase subunit beta (301 aa).

Residues 25 to 294 (LWIKDPSTGE…NSDAPEHEKT (270 aa)) enclose the CoA carboxyltransferase N-terminal domain. Residues 282 to 301 (QPGNSDAPEHEKTEATDKAA) form a disordered region. A compositionally biased stretch (basic and acidic residues) spans 288–301 (APEHEKTEATDKAA).

This sequence belongs to the AccD/PCCB family. Acetyl-CoA carboxylase is a heterohexamer composed of biotin carboxyl carrier protein (AccB), biotin carboxylase (AccC) and two subunits each of ACCase subunit alpha (AccA) and ACCase subunit beta (AccD).

The protein resides in the cytoplasm. The catalysed reaction is N(6)-carboxybiotinyl-L-lysyl-[protein] + acetyl-CoA = N(6)-biotinyl-L-lysyl-[protein] + malonyl-CoA. It participates in lipid metabolism; malonyl-CoA biosynthesis; malonyl-CoA from acetyl-CoA: step 1/1. Component of the acetyl coenzyme A carboxylase (ACC) complex. Biotin carboxylase (BC) catalyzes the carboxylation of biotin on its carrier protein (BCCP) and then the CO(2) group is transferred by the transcarboxylase to acetyl-CoA to form malonyl-CoA. This is Acetyl-coenzyme A carboxylase carboxyl transferase subunit beta from Brucella anthropi (strain ATCC 49188 / DSM 6882 / CCUG 24695 / JCM 21032 / LMG 3331 / NBRC 15819 / NCTC 12168 / Alc 37) (Ochrobactrum anthropi).